The primary structure comprises 599 residues: Thiamine transporter THI72 (599 aa).

Helical transmembrane passes span 42–62 (WGFW…GMWI), 78–98 (IGAF…NSCP), 112–132 (FVFG…MSIV), 174–194 (LIGF…KPYH), 197–217 (YILI…VIYL), 280–300 (IVAL…GASA), 333–353 (FFCG…NCGF), 372–392 (GAIF…YNSS), 395–415 (FLTV…VMIC), 447–467 (AIVA…WEVN), and 484–504 (SFFS…LFPF). The segment at 553 to 599 (HEYKPESSDDELPELTKTSSENTKVFEIVHQKDNEKESSTSSEKQIA) is disordered. Phosphoserine is present on residues S560 and S572. Basic and acidic residues predominate over residues 579–590 (EIVHQKDNEKES).

It belongs to the purine-cytosine permease (2.A.39) family.

Its subcellular location is the membrane. Low affinity thiamine transporter responsible for intake of thiamine. It is possible that the primary function is the uptake of closely related compounds and that thiamine transport is a secondary activity of these proteins. The polypeptide is Thiamine transporter THI72 (THI72) (Saccharomyces cerevisiae (strain ATCC 204508 / S288c) (Baker's yeast)).